The sequence spans 547 residues: CTP synthase (547 aa).

An amidoligase domain region spans residues 1 to 265 (MARFIFITGG…DQAVLDAFQI (265 aa)). Residue S13 coordinates CTP. S13 contacts UTP. Residues 14-19 (SLGKGL) and D71 each bind ATP. Positions 71 and 139 each coordinate Mg(2+). CTP-binding positions include 146–148 (DIE), 186–191 (KTKPTQ), and K222. UTP contacts are provided by residues 186–191 (KTKPTQ) and K222. The Glutamine amidotransferase type-1 domain occupies 291–546 (KIAIVGKYVQ…VRAAKESSRL (256 aa)). G353 lines the L-glutamine pocket. C380 serves as the catalytic Nucleophile; for glutamine hydrolysis. Residues 381-384 (LGMQ), E404, and R474 contribute to the L-glutamine site. Catalysis depends on residues H519 and E521.

It belongs to the CTP synthase family. As to quaternary structure, homotetramer.

It catalyses the reaction UTP + L-glutamine + ATP + H2O = CTP + L-glutamate + ADP + phosphate + 2 H(+). It carries out the reaction L-glutamine + H2O = L-glutamate + NH4(+). The enzyme catalyses UTP + NH4(+) + ATP = CTP + ADP + phosphate + 2 H(+). It functions in the pathway pyrimidine metabolism; CTP biosynthesis via de novo pathway; CTP from UDP: step 2/2. Allosterically activated by GTP, when glutamine is the substrate; GTP has no effect on the reaction when ammonia is the substrate. The allosteric effector GTP functions by stabilizing the protein conformation that binds the tetrahedral intermediate(s) formed during glutamine hydrolysis. Inhibited by the product CTP, via allosteric rather than competitive inhibition. Functionally, catalyzes the ATP-dependent amination of UTP to CTP with either L-glutamine or ammonia as the source of nitrogen. Regulates intracellular CTP levels through interactions with the four ribonucleotide triphosphates. This is CTP synthase from Ruegeria pomeroyi (strain ATCC 700808 / DSM 15171 / DSS-3) (Silicibacter pomeroyi).